Reading from the N-terminus, the 332-residue chain is Biotin synthase (332 aa).

Residues 46 to 275 (YYGKKVKLNM…SKEIRISGGR (230 aa)) form the Radical SAM core domain. Residues Cys64, Cys68, and Cys71 each contribute to the [4Fe-4S] cluster site. [2Fe-2S] cluster-binding residues include Cys108, Cys140, Cys200, and Arg270.

The protein belongs to the radical SAM superfamily. Biotin synthase family. As to quaternary structure, homodimer. [4Fe-4S] cluster serves as cofactor. [2Fe-2S] cluster is required as a cofactor.

It catalyses the reaction (4R,5S)-dethiobiotin + (sulfur carrier)-SH + 2 reduced [2Fe-2S]-[ferredoxin] + 2 S-adenosyl-L-methionine = (sulfur carrier)-H + biotin + 2 5'-deoxyadenosine + 2 L-methionine + 2 oxidized [2Fe-2S]-[ferredoxin]. It functions in the pathway cofactor biosynthesis; biotin biosynthesis; biotin from 7,8-diaminononanoate: step 2/2. Functionally, catalyzes the conversion of dethiobiotin (DTB) to biotin by the insertion of a sulfur atom into dethiobiotin via a radical-based mechanism. This is Biotin synthase from Lysinibacillus sphaericus (Bacillus sphaericus).